The following is a 263-amino-acid chain: L-aspartate dehydrogenase (263 aa).

NAD(+)-binding residues include Ala-120 and Asn-186. His-216 is an active-site residue.

The protein belongs to the L-aspartate dehydrogenase family.

The catalysed reaction is L-aspartate + NADP(+) + H2O = oxaloacetate + NH4(+) + NADPH + H(+). It carries out the reaction L-aspartate + NAD(+) + H2O = oxaloacetate + NH4(+) + NADH + H(+). It functions in the pathway cofactor biosynthesis; NAD(+) biosynthesis; iminoaspartate from L-aspartate (dehydrogenase route): step 1/1. In terms of biological role, specifically catalyzes the NAD or NADP-dependent dehydrogenation of L-aspartate to iminoaspartate. The sequence is that of L-aspartate dehydrogenase from Acinetobacter baumannii (strain AB307-0294).